The sequence spans 1898 residues: 1-phosphatidylinositol 4,5-bisphosphate phosphodiesterase epsilon-1 (1898 aa).

Positions 66–328 (FPEEVAFQLS…EREQKEKEAK (263 aa)) constitute a Ras-GEF domain. Disordered regions lie at residues 419 to 444 (QPLDSGRGAPSPMPSGRTPGTGGVGV) and 569 to 722 (TNTN…GPSG). A compositionally biased stretch (polar residues) spans 569–583 (TNTNATRPNDSSLSS). Positions 590–605 (SRLKNLKNAMQKKLRG) are enriched in basic residues. Composition is skewed to low complexity over residues 625-637 (PPSIKSQISSQSG), 666-687 (YTPRSRTPTSSSYGGRSVGGRS), and 701-716 (SGSISSSGQMSIQVSG). Residues 910–1058 (EDLRYPLSHY…MKNKILIKNK (149 aa)) enclose the PI-PLC X-box domain. Catalysis depends on residues His925 and His970. 2 disordered regions span residues 1082-1178 (QLNL…DRKT) and 1238-1274 (EEGPASASLSFSSRARTPSNLLNTPAPPRRQRSSTQL). Residues 1098 to 1123 (TVDEVEDDDLDEFLDDEENEEDDQEE) show a composition bias toward acidic residues. The segment covering 1124–1144 (VQVRSEKEDSPKTSKRAEKSA) has biased composition (basic and acidic residues). Residues 1146–1155 (NIKQQDSLCS) show a composition bias toward polar residues. 2 stretches are compositionally biased toward low complexity: residues 1163–1172 (KPSTSKTTSK) and 1242–1253 (ASASLSFSSRAR). The region spanning 1279–1385 (AAEFLGSVRA…CGYQLKPRCL (107 aa)) is the PI-PLC Y-box domain. The C2 domain maps to 1391-1517 (LLYNKFLPLS…PLRTPTNLPI (127 aa)). One can recognise a Ras-associating 1 domain in the interval 1570–1665 (QIFVLRITGA…RRFVLRKKGS (96 aa)). Residues 1680-1694 (GTSGSSTSVSPSPLT) are compositionally biased toward low complexity. Residues 1680-1711 (GTSGSSTSVSPSPLTKDGHVKSASSNQLHGRS) are disordered. One can recognise a Ras-associating 2 domain in the interval 1738–1857 (DTFLVCVHNV…GRFVLENRKD (120 aa)).

As to quaternary structure, interacts (via Ras-associating domain 1) with let-60 (in GTP-bound form). The cofactor is Ca(2+). As to expression, expressed in the spermatheca, vulva, intestine and excretory cells. Expressed in sensory neurons AWC, AFD, ASE, ASG and BAG, interneurons, ventral nerve cord neurons and tail neurons. Expressed in body muscles.

It catalyses the reaction a 1,2-diacyl-sn-glycero-3-phospho-(1D-myo-inositol-4,5-bisphosphate) + H2O = 1D-myo-inositol 1,4,5-trisphosphate + a 1,2-diacyl-sn-glycerol + H(+). Its function is as follows. The production of the second messenger molecules diacylglycerol (DAG) and inositol 1,4,5-trisphosphate (IP3) is mediated by activated phosphatidylinositol-specific phospholipase C enzymes. plc-1 is a bifunctional enzyme which also regulates small GTPases of the Ras superfamily through its Ras guanine-exchange factor (RasGEF) activity. By activating IP3 receptor itr-1-mediated intracellular Ca(2+) release via the production of IP3, regulates ovulation by controlling contraction and/or dilation of the distal spermatheca valve during oocyte entry and the timing of the dilation of the spermatheca-uterine valve during oocyte exit. In a similar manner, plays an essential role in epidermal morphogenesis by regulating migration of epidermal cells during ventral closure and to a lesser extent by regulating epidermal cell dorsal intercalation. Involved in the immune response to S.aureus bacterium by activating kinase dkf-1 via the production of DAG which in turn activates transcription factor hlh-30. In ASER neurons, required for adjusting the orientation behavior in salt gradients based on the memory of previous salt concentration encountered. This chain is 1-phosphatidylinositol 4,5-bisphosphate phosphodiesterase epsilon-1, found in Caenorhabditis elegans.